A 182-amino-acid polypeptide reads, in one-letter code: Small ribosomal subunit protein uS5 (182 aa).

Positions 16-79 (FVDRLVHINR…EAAKRGMIYV (64 aa)) constitute an S5 DRBM domain.

Belongs to the universal ribosomal protein uS5 family. Part of the 30S ribosomal subunit. Contacts proteins S4 and S8.

In terms of biological role, with S4 and S12 plays an important role in translational accuracy. Functionally, located at the back of the 30S subunit body where it stabilizes the conformation of the head with respect to the body. This is Small ribosomal subunit protein uS5 from Bartonella quintana (strain Toulouse) (Rochalimaea quintana).